Here is a 618-residue protein sequence, read N- to C-terminus: DNA mismatch repair protein MutL (618 aa).

The segment covering 366 to 381 (AEPTAAREPATPRYSG) has biased composition (low complexity). A disordered region spans residues 366-405 (AEPTAAREPATPRYSGGTSGGNGGRQSAGGWPHAQPGYQK). The segment covering 382 to 392 (GTSGGNGGRQS) has biased composition (gly residues).

The protein belongs to the DNA mismatch repair MutL/HexB family.

In terms of biological role, this protein is involved in the repair of mismatches in DNA. It is required for dam-dependent methyl-directed DNA mismatch repair. May act as a 'molecular matchmaker', a protein that promotes the formation of a stable complex between two or more DNA-binding proteins in an ATP-dependent manner without itself being part of a final effector complex. The sequence is that of DNA mismatch repair protein MutL from Salmonella agona (strain SL483).